We begin with the raw amino-acid sequence, 82 residues long: MKARGSRENASKRRPSQTQYDTHLRTNQRITITRTAESHELVNQRHKIFTQSFLRTFRNQQVNKRLTKKNHLGIKKSSIVTL.

Basic and acidic residues predominate over residues 1-11; the sequence is MKARGSRENAS. The segment at 1–25 is disordered; sequence MKARGSRENASKRRPSQTQYDTHLR. The segment covering 16–25 has biased composition (polar residues); that stretch reads SQTQYDTHLR.

This is an uncharacterized protein from Human cytomegalovirus (strain AD169) (HHV-5).